Consider the following 81-residue polypeptide: Defensin-like protein 311 (81 aa).

A signal peptide spans 1 to 24; sequence MEKISAFFVILFLVSSCLVTMSVG. 3 disulfide bridges follow: C27–C50, C33–C57, and C41–C59.

The protein belongs to the DEFL family.

The protein resides in the secreted. In Arabidopsis thaliana (Mouse-ear cress), this protein is Defensin-like protein 311.